The sequence spans 345 residues: Phenylalanine--tRNA ligase alpha subunit (345 aa).

E253 is a binding site for Mg(2+).

This sequence belongs to the class-II aminoacyl-tRNA synthetase family. Phe-tRNA synthetase alpha subunit type 1 subfamily. Tetramer of two alpha and two beta subunits. Mg(2+) is required as a cofactor.

It localises to the cytoplasm. The enzyme catalyses tRNA(Phe) + L-phenylalanine + ATP = L-phenylalanyl-tRNA(Phe) + AMP + diphosphate + H(+). The protein is Phenylalanine--tRNA ligase alpha subunit of Nitratidesulfovibrio vulgaris (strain DSM 19637 / Miyazaki F) (Desulfovibrio vulgaris).